The sequence spans 202 residues: ATP-dependent Clp protease proteolytic subunit (202 aa).

S106 functions as the Nucleophile in the catalytic mechanism. Residue H131 is part of the active site.

The protein belongs to the peptidase S14 family. As to quaternary structure, fourteen ClpP subunits assemble into 2 heptameric rings which stack back to back to give a disk-like structure with a central cavity, resembling the structure of eukaryotic proteasomes.

The protein localises to the cytoplasm. The catalysed reaction is Hydrolysis of proteins to small peptides in the presence of ATP and magnesium. alpha-casein is the usual test substrate. In the absence of ATP, only oligopeptides shorter than five residues are hydrolyzed (such as succinyl-Leu-Tyr-|-NHMec, and Leu-Tyr-Leu-|-Tyr-Trp, in which cleavage of the -Tyr-|-Leu- and -Tyr-|-Trp bonds also occurs).. Its function is as follows. Cleaves peptides in various proteins in a process that requires ATP hydrolysis. Has a chymotrypsin-like activity. Plays a major role in the degradation of misfolded proteins. The polypeptide is ATP-dependent Clp protease proteolytic subunit (Shewanella sp. (strain ANA-3)).